Here is a 366-residue protein sequence, read N- to C-terminus: Cell division protein FtsY homolog, chloroplastic (366 aa).

The transit peptide at 1–40 (MATSSAHLSFLAGRISPFSSERIGLFPLRGEFRPRMTRFR) directs the protein to the chloroplast. GTP is bound by residues 171–178 (GVNGGGKT), 254–258 (DTSGR), and 318–321 (TKLD).

This sequence belongs to the GTP-binding SRP family. Monomer. Interacts with FFC/cpSRP54, a component of the cpSRP complex, composed of a FFC/cpSRP54 monomer and a CAO/cpSRP43 dimer. The complex with FFC/cpSRP54 is formed when both proteins are bound with GTP. In terms of tissue distribution, expressed in green tissues. Low levels in roots and seeds.

It is found in the plastid. The protein resides in the chloroplast stroma. The protein localises to the chloroplast thylakoid membrane. Signal recognition particle receptor protein. Binds GTP specifically. The GTPase activity is inhibited by the N-terminus of the protein until binding to the thylakoid membrane. Activates the GTPase activity of FFC/cpSRP54 when bound to the cpSRP complex. Required for light-harvesting chlorophyll a/b-binding protein (LHCP) integration into thylakoids. Might be also functionally linked to the Sec translocation machinery. This chain is Cell division protein FtsY homolog, chloroplastic (CPFTSY), found in Arabidopsis thaliana (Mouse-ear cress).